The primary structure comprises 201 residues: IDLSRF-like peptide (201 aa).

The N-terminal stretch at 1 to 28 (MVRRFCNGAVALGIALTACAAFPRAIMA) is a signal peptide. Residues 43-201 (SDACHPYEPF…EKLVKTGFLD (159 aa)) constitute a propeptide that is removed on maturation. The 41-residue stretch at 45-85 (ACHPYEPFKCPGDGLCISIQYLCDGAPDCQDGYDEDSRLCT) folds into the LDL-receptor class A domain. 3 cysteine pairs are disulfide-bonded: Cys46-Cys60, Cys54-Cys73, and Cys67-Cys84.

As to expression, expressed in central brain, antennal and optical lobes, in gnathal, thoracic and abdominal ganglia and in the retrocerebral complex (at protein level).

The protein resides in the secreted. This Camponotus floridanus (Florida carpenter ant) protein is IDLSRF-like peptide.